Here is a 432-residue protein sequence, read N- to C-terminus: MQVSVETTQGLGRRVTITIAADSIENAVKSELVNVAKKVRIDGFRKGKVPMNIVAQRYGASVRQDVLGDLMSRHFVDAIIKEKINPAGAPNYVPGEYKLGEDFTYAVEFEVYPEVELQGLDAIEVEKPVVEVTDADVDTMLETLRKQQATWKEKEGAVDAEDRVTIDFTGSVDGEEFEGGKASDFVLAMGQGRMIPGFEDGIKGHKAGEEFTIDVTFPEEYHAENLKGKAAKFVINLKKVEERELPELTEEFIKRFGVEDGSVAGLRAEVRKNMERELKGAVRNRVKSQAIEGLVKANEIDVPAALIDSEIDVLRRQAAQRFGGNEKQALELPRELFEEQAKRRVVVGLLLGEVIRTNELKADEERVKALIEEMASAYEDPSEVVEFYSKNKELMDNMRNVALEEQAVEAVLAKAKVSEKATSFNELMNQQA.

The 86-residue stretch at 161–246 (EDRVTIDFTG…LKKVEERELP (86 aa)) folds into the PPIase FKBP-type domain.

This sequence belongs to the FKBP-type PPIase family. Tig subfamily.

It localises to the cytoplasm. It carries out the reaction [protein]-peptidylproline (omega=180) = [protein]-peptidylproline (omega=0). Functionally, involved in protein export. Acts as a chaperone by maintaining the newly synthesized protein in an open conformation. Functions as a peptidyl-prolyl cis-trans isomerase. This is Trigger factor from Klebsiella pneumoniae subsp. pneumoniae (strain ATCC 700721 / MGH 78578).